The primary structure comprises 68 residues: MIKVIKKKSHSGLKKRIKITKKKKLLRGHAYKNHLAASKTTKQNRQLRGVTCVKLCDYNRIKTLIRGL.

This sequence belongs to the bacterial ribosomal protein bL35 family.

The polypeptide is Large ribosomal subunit protein bL35 (Aster yellows witches'-broom phytoplasma (strain AYWB)).